We begin with the raw amino-acid sequence, 435 residues long: D-amino acid dehydrogenase (435 aa).

FAD is bound at residue 3–17 (VLILGSGVIGTTSAW).

Belongs to the DadA oxidoreductase family. FAD serves as cofactor.

It carries out the reaction a D-alpha-amino acid + A + H2O = a 2-oxocarboxylate + AH2 + NH4(+). The protein operates within amino-acid degradation; D-alanine degradation; NH(3) and pyruvate from D-alanine: step 1/1. Functionally, oxidative deamination of D-amino acids. This is D-amino acid dehydrogenase from Xylella fastidiosa (strain M12).